Consider the following 260-residue polypeptide: Putative nudix hydrolase 6 (260 aa).

In terms of domain architecture, Nudix hydrolase spans 113 to 257 (PNHAADPIVS…SHFIDLLKES (145 aa)). The Nudix box signature appears at 148-170 (GMVDAGEHVSQTLRREFAEEAMH). Glu-163 and Glu-167 together coordinate Mg(2+).

This sequence belongs to the Nudix hydrolase family. It depends on Mg(2+) as a cofactor. Mn(2+) is required as a cofactor.

Its function is as follows. Probably mediates the hydrolysis of some nucleoside diphosphate derivatives. The polypeptide is Putative nudix hydrolase 6 (ndx-6) (Caenorhabditis elegans).